Here is a 64-residue protein sequence, read N- to C-terminus: Metallothionein-A (64 aa).

The protein belongs to the metallothionein superfamily. Type 4 family.

In terms of biological role, metallothioneins have a high content of cysteine residues that bind various heavy metals. This is Metallothionein-A (MTA) from Strongylocentrotus purpuratus (Purple sea urchin).